A 281-amino-acid chain; its full sequence is MVHGNSRPLEKDVVRDLRRELSYGQYLRLDRLLDAQHPVSEPEHHDELLFIIQHQTVELWLKLILHELRTAREHLARDELKPALKQLARVKHVQHTLTEQWSVLATLTPAEYVEFRGFLGRSSGFQSYQYRAIELILGNKNAEMLEVFAHDEFAHELLNGLLKEPSVYDEFVRLLHRRGHDVPAAFLQRDVSLPHTFTPELVPLFRGIYETAAENWDAYEACEELVDLEENFQFWRFRHLKTVERTIGLKHGTGGSSGVSFLRRALELTFFPELYAVRTEI.

Residues 50 to 54 (FIIQH), Y112, and R116 contribute to the substrate site. H239 provides a ligand contact to heme. Residue T253 coordinates substrate.

Belongs to the tryptophan 2,3-dioxygenase family. In terms of assembly, homotetramer. Requires heme as cofactor.

The catalysed reaction is L-tryptophan + O2 = N-formyl-L-kynurenine. It functions in the pathway amino-acid degradation; L-tryptophan degradation via kynurenine pathway; L-kynurenine from L-tryptophan: step 1/2. Functionally, heme-dependent dioxygenase that catalyzes the oxidative cleavage of the L-tryptophan (L-Trp) pyrrole ring and converts L-tryptophan to N-formyl-L-kynurenine. Catalyzes the oxidative cleavage of the indole moiety. In Saccharopolyspora erythraea (strain ATCC 11635 / DSM 40517 / JCM 4748 / NBRC 13426 / NCIMB 8594 / NRRL 2338), this protein is Tryptophan 2,3-dioxygenase.